The primary structure comprises 135 residues: Basic phospholipase A2 10 (135 aa).

7 cysteine pairs are disulfide-bonded: Cys28-Cys87, Cys42-Cys134, Cys44-Cys60, Cys59-Cys115, Cys66-Cys108, Cys76-Cys101, and Cys94-Cys106. 3 residues coordinate Ca(2+): Tyr43, Gly45, and Gly47. His63 is an active-site residue. A Ca(2+)-binding site is contributed by Asp64. Asp109 is an active-site residue.

This sequence belongs to the phospholipase A2 family. Group I subfamily. D49 sub-subfamily. The cofactor is Ca(2+). Expressed by the venom gland.

The protein localises to the secreted. The enzyme catalyses a 1,2-diacyl-sn-glycero-3-phosphocholine + H2O = a 1-acyl-sn-glycero-3-phosphocholine + a fatty acid + H(+). In terms of biological role, snake venom phospholipase A2 (PLA2) that inhibits neuromuscular transmission by blocking acetylcholine release from the nerve termini. PLA2 catalyzes the calcium-dependent hydrolysis of the 2-acyl groups in 3-sn-phosphoglycerides. The polypeptide is Basic phospholipase A2 10 (Bungarus fasciatus (Banded krait)).